The primary structure comprises 503 residues: Drimenol monooxygenase (503 aa).

The chain crosses the membrane as a helical span at residues 7–23 (MICIVVSGLLLYSSRTS). Position 471 (Ser471) interacts with heme.

Belongs to the cytochrome P450 family. Heme is required as a cofactor.

Its subcellular location is the membrane. The catalysed reaction is (5S,9S,10S)-drim-7-en-11-ol + reduced [NADPH--hemoprotein reductase] + O2 = (5S,10S)-(9R)-7-drimene-11,12-diol + oxidized [NADPH--hemoprotein reductase] + H2O + H(+). Catalyzes the conversion of drimenol to drimendiol, a precursor of the sesquiterpenoid polygodial. Polygodial has been shown to be an antifeedant for a number of herbivorous insects. The chain is Drimenol monooxygenase from Persicaria hydropiper (Marshpepper knotweed).